Consider the following 152-residue polypeptide: Nucleoside diphosphate kinase B (152 aa).

Residues Met-1–Lys-66 are interaction with AKAP13. ATP-binding residues include Lys-12, Phe-60, Arg-88, Thr-94, Arg-105, and Asn-115. His-118 (pros-phosphohistidine intermediate) is an active-site residue.

It belongs to the NDK family. Hexamer of two different chains: An and B (A6, A5B, A4B2, A3B3, A2B4, AB5, B6). Interacts with CAPN8. Interacts with AKAP13. Interacts with ITGB1BP1 (via C-terminal domain region). Interacts with BCL2L10. Mg(2+) is required as a cofactor. In terms of processing, the N-terminus is blocked.

Its subcellular location is the cytoplasm. The protein resides in the cell projection. The protein localises to the lamellipodium. It is found in the ruffle. It localises to the nucleus. It catalyses the reaction a 2'-deoxyribonucleoside 5'-diphosphate + ATP = a 2'-deoxyribonucleoside 5'-triphosphate + ADP. The enzyme catalyses a ribonucleoside 5'-diphosphate + ATP = a ribonucleoside 5'-triphosphate + ADP. The catalysed reaction is ATP + protein L-histidine = ADP + protein N-phospho-L-histidine.. Functionally, major role in the synthesis of nucleoside triphosphates other than ATP. The ATP gamma phosphate is transferred to the NDP beta phosphate via a ping-pong mechanism, using a phosphorylated active-site intermediate. Negatively regulates Rho activity by interacting with AKAP13/LBC. Acts as a transcriptional activator of the MYC gene; binds DNA non-specifically. Binds to both single-stranded guanine- and cytosine-rich strands within the nuclease hypersensitive element (NHE) III(1) region of the MYC gene promoter. Does not bind to duplex NHE III(1). Has G-quadruplex (G4) DNA-binding activity, which is independent of its nucleotide-binding and kinase activity. Binds both folded and unfolded G4 with similar low nanomolar affinities. Stabilizes folded G4s regardless of whether they are prefolded or not. Exhibits histidine protein kinase activity. The protein is Nucleoside diphosphate kinase B (Nme2) of Rattus norvegicus (Rat).